A 133-amino-acid chain; its full sequence is Nickel-responsive regulator (133 aa).

Residues H76, H87, H89, and C95 each contribute to the Ni(2+) site.

It belongs to the transcriptional regulatory CopG/NikR family. In terms of assembly, homotetramer. Ni(2+) serves as cofactor.

Functionally, transcriptional repressor of the nikABCDE operon. Is active in the presence of excessive concentrations of intracellular nickel. The protein is Nickel-responsive regulator of Salmonella arizonae (strain ATCC BAA-731 / CDC346-86 / RSK2980).